A 55-amino-acid chain; its full sequence is Large ribosomal subunit protein bL33 (55 aa).

It belongs to the bacterial ribosomal protein bL33 family.

This is Large ribosomal subunit protein bL33 from Maricaulis maris (strain MCS10) (Caulobacter maris).